Consider the following 281-residue polypeptide: MEAARDAQHSDVLESKGCLASRTSSHQNRRASLSSDGTGLRVTDAPGLPRVMTPSDTASGLGQKTSSTSSSSSSSSSSSPSSSSSAQANRSLKVSLPEIQKEKYPEEFSLLKSQTTDGQRPEWTFYPRFSSNIHTYHVGKQCFFNGVFRGNRKSVAERTVDKSLGKKKYDIDPRNGIPKLTPGDNPYMFPEQSKEFFKAGATLPPVNFSLGPYEKKFDTFIPLEPLPQIPNLPFWEKEKANNLKNEIKEVEDLDNWQAPMPFLHGFLSTANRTITTCDQKV.

Over residues 1-14 (MEAARDAQHSDVLE) the composition is skewed to basic and acidic residues. Residues 1-92 (MEAARDAQHS…SSSAQANRSL (92 aa)) are disordered. Over residues 21–37 (SRTSSHQNRRASLSSDG) the composition is skewed to polar residues. Position 53 is a phosphothreonine (Thr-53). Residues 54–65 (PSDTASGLGQKT) are compositionally biased toward polar residues. Residues 66 to 85 (SSTSSSSSSSSSSSPSSSSS) are compositionally biased toward low complexity. Ser-71, Ser-74, Ser-77, Ser-78, Ser-79, and Ser-91 each carry phosphoserine.

As to expression, detected in pachytene spermatocytes and round spermatids.

In Rattus norvegicus (Rat), this protein is Spermatogenesis-associated serine-rich protein 1 (Spats1).